Reading from the N-terminus, the 283-residue chain is Phosphatidylserine decarboxylase proenzyme (283 aa).

Residues Asp-96, His-152, and Ser-250 each act as charge relay system; for autoendoproteolytic cleavage activity in the active site. Catalysis depends on Ser-250, which acts as the Schiff-base intermediate with substrate; via pyruvic acid; for decarboxylase activity. Ser-250 is modified (pyruvic acid (Ser); by autocatalysis).

The protein belongs to the phosphatidylserine decarboxylase family. PSD-B subfamily. Prokaryotic type I sub-subfamily. As to quaternary structure, heterodimer of a large membrane-associated beta subunit and a small pyruvoyl-containing alpha subunit. Pyruvate is required as a cofactor. Post-translationally, is synthesized initially as an inactive proenzyme. Formation of the active enzyme involves a self-maturation process in which the active site pyruvoyl group is generated from an internal serine residue via an autocatalytic post-translational modification. Two non-identical subunits are generated from the proenzyme in this reaction, and the pyruvate is formed at the N-terminus of the alpha chain, which is derived from the carboxyl end of the proenzyme. The autoendoproteolytic cleavage occurs by a canonical serine protease mechanism, in which the side chain hydroxyl group of the serine supplies its oxygen atom to form the C-terminus of the beta chain, while the remainder of the serine residue undergoes an oxidative deamination to produce ammonia and the pyruvoyl prosthetic group on the alpha chain. During this reaction, the Ser that is part of the protease active site of the proenzyme becomes the pyruvoyl prosthetic group, which constitutes an essential element of the active site of the mature decarboxylase.

It is found in the cell membrane. The catalysed reaction is a 1,2-diacyl-sn-glycero-3-phospho-L-serine + H(+) = a 1,2-diacyl-sn-glycero-3-phosphoethanolamine + CO2. It participates in phospholipid metabolism; phosphatidylethanolamine biosynthesis; phosphatidylethanolamine from CDP-diacylglycerol: step 2/2. In terms of biological role, catalyzes the formation of phosphatidylethanolamine (PtdEtn) from phosphatidylserine (PtdSer). In Acinetobacter baumannii (strain AB0057), this protein is Phosphatidylserine decarboxylase proenzyme.